The sequence spans 566 residues: Arginine--tRNA ligase (566 aa).

Residues 121-131 (PNIAKPMSMGH) carry the 'HIGH' region motif.

It belongs to the class-I aminoacyl-tRNA synthetase family. As to quaternary structure, monomer.

The protein resides in the cytoplasm. The enzyme catalyses tRNA(Arg) + L-arginine + ATP = L-arginyl-tRNA(Arg) + AMP + diphosphate. The chain is Arginine--tRNA ligase from Oenococcus oeni (strain ATCC BAA-331 / PSU-1).